Reading from the N-terminus, the 409-residue chain is E3 ubiquitin-protein ligase MARCHF4 (409 aa).

Positions 1 to 17 are cleaved as a signal peptide; it reads MLMPLGGLLWWWCCCCG. A disordered region spans residues 92–133; sequence GPREAVGRETPPLPPPPPLPPSGDDDWDGPATGPPASLLSSA. Over residues 102–112 the composition is skewed to pro residues; that stretch reads PPLPPPPPLPP. The segment at 154-214 adopts an RING-CH-type zinc-finger fold; sequence DSGMRTPLCR…ELCYYKYHVI (61 aa). Residues C162, C165, C178, C180, H188, C191, C204, and C207 each coordinate Zn(2+). 2 helical membrane-spanning segments follow: residues 242–262 and 271–291; these read LGSL…FSPS and LFQI…GLII. Disordered regions lie at residues 323–372 and 389–409; these read EDQK…GPVS and PHDQ…VTTV. Positions 328–343 are enriched in polar residues; that stretch reads GGRTNLQTSSSAQANL.

It localises to the golgi apparatus membrane. It carries out the reaction S-ubiquitinyl-[E2 ubiquitin-conjugating enzyme]-L-cysteine + [acceptor protein]-L-lysine = [E2 ubiquitin-conjugating enzyme]-L-cysteine + N(6)-ubiquitinyl-[acceptor protein]-L-lysine.. Its pathway is protein modification; protein ubiquitination. E3 ubiquitin-protein ligase that may mediate ubiquitination of MHC-I and CD4, and promote their subsequent endocytosis and sorting to lysosomes via multivesicular bodies. E3 ubiquitin ligases accept ubiquitin from an E2 ubiquitin-conjugating enzyme in the form of a thioester and then directly transfer the ubiquitin to targeted substrates. The protein is E3 ubiquitin-protein ligase MARCHF4 (Marchf4) of Mus musculus (Mouse).